We begin with the raw amino-acid sequence, 99 residues long: RING finger protein Z (99 aa).

The N-myristoyl glycine; by host moiety is linked to residue Gly-2. The RING-type; atypical zinc finger occupies Cys-31–Cys-67. The segment at Lys-74–Pro-99 is disordered. The segment covering Pro-77–Ala-89 has biased composition (low complexity). The PTAP/PSAP motif motif lies at Pro-81–Pro-84. The PPXY motif signature appears at Pro-94–Tyr-97.

It belongs to the arenaviridae Z protein family. Interacts with protein NP; this interaction probably directs the encapsidated genome to budding sites. Interacts (via RING domain) with polymerase L; this interaction inhibits viral transcription and replication, Z partially blocks the product exit tunnel for the releasing nascent RNA product. Interacts with the glycoprotein complex; this interaction plays a role in virion budding. Interacts with host eIF4E; this interaction results in eIF4E reduced affinity for its substrate, the 5'-m7 G cap structure. Interacts (via late-budding domain) with host TSG101; this interaction is essential for budding and release of viral particles. Interacts with host RPLP0; this interaction may serve to load ribosome-like particles inside the virion. Interacts with host PML; this interaction induces PML bodies redistribution in the cytoplasm upon viral infection. Interacts with host TAX1BP1. Post-translationally, myristoylation is required for the role of RING finger protein Z in assembly and budding.

The protein resides in the virion. The protein localises to the host cytoplasm. It localises to the host perinuclear region. It is found in the host cell membrane. Its function is as follows. Plays a crucial role in virion assembly and budding. Expressed late in the virus life cycle, it acts as an inhibitor of viral transcription and RNA synthesis by interacting with the viral polymerase L. Presumably recruits the NP encapsidated genome to cellular membranes at budding sites via direct interaction with NP. Plays critical roles in the final steps of viral release by interacting with host TSG101, a member of the vacuolar protein-sorting pathway and using other cellular host proteins involved in vesicle formation pathway. The budding of the virus progeny occurs after association of protein Z with the viral glycoprotein complex SSP-GP1-GP2 at the cell periphery, step that requires myristoylation of protein Z. Also selectively represses protein production by associating with host eIF4E. In cell-based minigenome assay, has an inhibitory effect on the ribonucleoprotein machinery (vRNP), which is responsible for the replication and transcription of the viral genome. The sequence is that of RING finger protein Z from Homo sapiens (Human).